Reading from the N-terminus, the 405-residue chain is Aurora kinase A (405 aa).

2 stretches are compositionally biased toward polar residues: residues 32 to 82 (VPSQ…QLQA) and 91 to 110 (RSLNNTQKSEQPSSSAPGNN). The disordered stretch occupies residues 32–127 (VPSQNPLSAN…KQKNEESKKR (96 aa)). Phosphoserine occurs at positions 42 and 52. The segment covering 111 to 127 (SEKELATKQKNEESKKR) has biased composition (basic and acidic residues). The Protein kinase domain maps to 134–384 (FEIGRPLGKG…LKDVLEHPWI (251 aa)). ATP-binding positions include K144, K163, and 212 to 214 (EYA). Residue D257 is the Proton acceptor of the active site. Residue K259 forms a Glycyl lysine isopeptide (Lys-Gly) (interchain with G-Cter in SUMO2) linkage. ATP is bound by residues 261-262 (EN) and D275. Residues 281-294 (HAPSSRRTTLCGTL) are activation segment. T288 and T289 each carry phosphothreonine. S343 is modified (phosphoserine). The disordered stretch occupies residues 385-405 (MANSSKPSSSQKSKDSTSKQS). Basic and acidic residues predominate over residues 396–405 (KSKDSTSKQS).

It belongs to the protein kinase superfamily. Ser/Thr protein kinase family. Aurora subfamily. As to quaternary structure, part of a complex composed of NEDD9, AURKA and CTTN; within the complex NEDD9 acts as a scaffold protein and is required for complex formation. Identified in a complex with AUNIP and NIN. Interacts with FBXL7. Interacts with CPEB1, JTB, TACC1, TPX2, PPP2CA, as well as with the protein phosphatase type 1 (PP1) isoforms PPP1CA, PPP1CB and PPP1CC. Also interacts with its substrates ARHGEF2, BORA, KIF2A, PARD3, and p53/TP53. Interaction with BORA promotes phosphorylation of PLK1. Interacts with CIMAP3. Interacts with GADD45A, competing with its oligomerization. Interacts (via C-terminus) with AUNIP (via C-terminus). Interacts with FRY; this interaction facilitates AURKA-mediated PLK1 phosphorylation. Interacts with SIRT2. Interacts with MYCN; interaction is phospho-independent and triggers AURKA activation; AURKA competes with FBXW7 for binding to unphosphorylated MYCN but not for binding to phosphorylated MYCN. Interacts with HNRNPU. Interacts with AAAS. Interacts with KLHL18 and CUL3. Interacts with FOXP1. Interacts with HDAC6; AURKA-mediated phosphorylation of HDAC6 promotes deacetylation of alpha-tubulin. In terms of processing, activated by phosphorylation at Thr-289; this brings about a change in the conformation of the activation segment. Phosphorylation at Thr-289 varies during the cell cycle and is highest during M phase. Autophosphorylated at Thr-289 upon TPX2 binding. Thr-289 can be phosphorylated by several kinases, including PAK and PKA. Protein phosphatase type 1 (PP1) binds AURKA and inhibits its activity by dephosphorylating Thr-289 during mitosis. Phosphorylation at Ser-343 decreases the kinase activity. PPP2CA controls degradation by dephosphorylating Ser-52 at the end of mitosis. Ubiquitinated by the E3 ubiquitin-protein ligase complex SCF(FBXL7) during mitosis, leading to its degradation by the proteasome. Ubiquitinated by CHFR, leading to its degradation by the proteasome. Ubiquitinated by the anaphase-promoting complex (APC), leading to its degradation by the proteasome. Ubiquitinated by the CUL3-KLHL18 ligase leading to its activation at the centrosome which is required for initiating mitotic entry. Ubiquitination mediated by CUL3-KLHL18 ligase does not lead to its degradation by the proteasome.

It is found in the cytoplasm. The protein resides in the cytoskeleton. Its subcellular location is the microtubule organizing center. It localises to the centrosome. The protein localises to the spindle pole. It is found in the centriole. The protein resides in the cell projection. Its subcellular location is the neuron projection. It localises to the cilium. The protein localises to the cilium basal body. It is found in the basolateral cell membrane. The enzyme catalyses L-seryl-[protein] + ATP = O-phospho-L-seryl-[protein] + ADP + H(+). The catalysed reaction is L-threonyl-[protein] + ATP = O-phospho-L-threonyl-[protein] + ADP + H(+). With respect to regulation, activation of CDK1, appears to be an upstream event of AURKA activation. Phosphatase inhibitor-2 (PPP1R2) and TPX2 act also as activators. Inactivated by the G2 checkpoint. Inhibited by GADD45A and p53/TP53, and through dephosphorylation by protein phosphatase type 1 (PP1). MLN8054 is also a potent and selective inhibitor. Activated during the early phase of cilia disassembly in the presence of CIMAP3. Inhibited by the small molecule inhibitor VX-680. Its function is as follows. Mitotic serine/threonine kinase that contributes to the regulation of cell cycle progression. Associates with the centrosome and the spindle microtubules during mitosis and plays a critical role in various mitotic events including the establishment of mitotic spindle, centrosome duplication, centrosome separation as well as maturation, chromosomal alignment, spindle assembly checkpoint, and cytokinesis. Required for normal spindle positioning during mitosis and for the localization of NUMA1 and DCTN1 to the cell cortex during metaphase. Required for initial activation of CDK1 at centrosomes. Phosphorylates numerous target proteins, including ARHGEF2, BORA, BRCA1, CDC25B, DLGP5, HDAC6, KIF2A, LATS2, NDEL1, PARD3, PPP1R2, PLK1, RASSF1, TACC3, p53/TP53 and TPX2. Phosphorylates MCRS1 which is required for MCRS1-mediated kinetochore fiber assembly and mitotic progression. Regulates KIF2A tubulin depolymerase activity. Important for microtubule formation and/or stabilization. Required for normal axon formation. Plays a role in microtubule remodeling during neurite extension. Also acts as a key regulatory component of the p53/TP53 pathway, and particularly the checkpoint-response pathways critical for oncogenic transformation of cells, by phosphorylating and destabilizing p53/TP53. Phosphorylates its own inhibitors, the protein phosphatase type 1 (PP1) isoforms, to inhibit their activity. Inhibits cilia outgrowth. Required for cilia disassembly via phosphorylation of HDAC6 and subsequent deacetylation of alpha-tubulin. Regulates protein levels of the anti-apoptosis protein BIRC5 by suppressing the expression of the SCF(FBXL7) E3 ubiquitin-protein ligase substrate adapter FBXL7 through the phosphorylation of the transcription factor FOXP1. This Canis lupus familiaris (Dog) protein is Aurora kinase A.